The sequence spans 304 residues: Acetyl-coenzyme A carboxylase carboxyl transferase subunit beta (304 aa).

The CoA carboxyltransferase N-terminal domain occupies 23 to 292 (VWTKCDSCGQ…PNPDAPREGV (270 aa)). The Zn(2+) site is built by cysteine 27, cysteine 30, cysteine 46, and cysteine 49. The C4-type zinc-finger motif lies at 27 to 49 (CDSCGQVLYRAELERNLEVCPKC). Positions 284–304 (NPDAPREGVVVPPAPGQESEA) are disordered.

It belongs to the AccD/PCCB family. Acetyl-CoA carboxylase is a heterohexamer composed of biotin carboxyl carrier protein (AccB), biotin carboxylase (AccC) and two subunits each of ACCase subunit alpha (AccA) and ACCase subunit beta (AccD). The cofactor is Zn(2+).

It is found in the cytoplasm. The enzyme catalyses N(6)-carboxybiotinyl-L-lysyl-[protein] + acetyl-CoA = N(6)-biotinyl-L-lysyl-[protein] + malonyl-CoA. The protein operates within lipid metabolism; malonyl-CoA biosynthesis; malonyl-CoA from acetyl-CoA: step 1/1. Its function is as follows. Component of the acetyl coenzyme A carboxylase (ACC) complex. Biotin carboxylase (BC) catalyzes the carboxylation of biotin on its carrier protein (BCCP) and then the CO(2) group is transferred by the transcarboxylase to acetyl-CoA to form malonyl-CoA. This chain is Acetyl-coenzyme A carboxylase carboxyl transferase subunit beta, found in Salmonella arizonae (strain ATCC BAA-731 / CDC346-86 / RSK2980).